A 283-amino-acid chain; its full sequence is Non-selective voltage-gated ion channel VDAC3 (283 aa).

At Cys2 the chain carries N-acetylcysteine. Phosphothreonine is present on Thr4. N6-acetyllysine is present on residues Lys12, Lys15, and Lys20. 2 beta stranded membrane-spanning segments follow: residues 26 to 35 and 39 to 47; these read MVKIDLKTKS and VEFSTSGHA. Residues Lys53 and Lys61 each participate in a glycyl lysine isopeptide (Lys-Gly) (interchain with G-Cter in ubiquitin) cross-link. The next 3 beta stranded transmembrane spans lie at 54 to 64, 69 to 76, and 80 to 89; these read ASGNLETKYKV, LTFTQKWN, and TLGTEISWEN. Residue Lys90 is modified to N6-acetyllysine. The beta stranded transmembrane segment at 95–104 threads the bilayer; it reads LKLTLDTIFV. Glycyl lysine isopeptide (Lys-Gly) (interchain with G-Cter in ubiquitin) cross-links involve residues Lys109 and Lys110. 10 beta stranded membrane passes run 111–120, 123–130, 137–145, 150–158, 163–175, 178–185, 189–198, 202–211, 218–227, and 231–238; these read SGKLKASYKR, FSVGSNVD, TIYGWAVLA, LAGYQMSFD, KLSQ…GYKA, FQLHTHVN, EFGGSIYQKV, IETSINLAWT, RFGIAAKYML, and TSLSAKVN. Lys163 is covalently cross-linked (Glycyl lysine isopeptide (Lys-Gly) (interchain with G-Cter in ubiquitin)). The residue at position 241 (Ser241) is a Phosphoserine. Residues 242–244 and 260–264 each bind NAD(+); these read LIG and SALID. A run of 2 beta stranded transmembrane segments spans residues 242–251 and 254–263; these read LIGLGYTQTL and GVKLTLSALI. Residue Lys266 is modified to N6-acetyllysine; alternate. Lys266 is covalently cross-linked (Glycyl lysine isopeptide (Lys-Gly) (interchain with G-Cter in ubiquitin); alternate). Residues 273–282 traverse the membrane as a beta stranded segment; the sequence is HKVGLGFELE. Residue Lys274 forms a Glycyl lysine isopeptide (Lys-Gly) (interchain with G-Cter in ubiquitin) linkage.

Belongs to the eukaryotic mitochondrial porin family. As to quaternary structure, interacts with ARMC12 in a TBC1D21-dependent manner. Interacts with MISFA. Post-translationally, ubiquitinated by PRKN during mitophagy, leading to its degradation and enhancement of mitophagy. Deubiquitinated by USP30. In terms of tissue distribution, expressed in erythrocytes (at protein level). Widely expressed. Highest in testis.

Its subcellular location is the mitochondrion outer membrane. The protein localises to the membrane. It carries out the reaction chloride(in) = chloride(out). It catalyses the reaction K(+)(in) = K(+)(out). Its function is as follows. Non-selective voltage-gated ion channel that mediates the transport of anions and cations through the mitochondrion outer membrane and plasma membrane. Forms a high-conducting channel with a stable open state and a voltage-induced closure with a mild preference for anions over cations. Involved in male fertility and sperm mitochondrial sheath formation. The polypeptide is Non-selective voltage-gated ion channel VDAC3 (Homo sapiens (Human)).